The chain runs to 2203 residues: Genome polyprotein (2203 aa).

Residue Gly2 is the site of N-myristoyl glycine; by host attachment. The Cytoplasmic segment spans residues 2-1513; it reads GAQVSTQKTG…HVSRAFICLQ (1512 aa). Residues 567–583 form an amphipathic alpha-helix region; sequence ELQNDVRQAVEGAIGRV. Catalysis depends on for protease 2A activity residues His890 and Asp908. Zn(2+) is bound by residues Cys925 and Cys927. Cys979 acts as the For protease 2A activity in catalysis. 2 residues coordinate Zn(2+): Cys985 and His987. A membrane-binding region spans residues 1119 to 1191; the sequence is SNGWLKKFTE…EQSAPSQSDQ (73 aa). The tract at residues 1119 to 1257 is oligomerization; that stretch reads SNGWLKKFTE…SPGAGKSVAT (139 aa). An RNA-binding region spans residues 1140–1144; sequence AVKIQ. An SF3 helicase domain is found at 1223–1379; it reads EKKMSNYIQF…SMYSQNGKIN (157 aa). Residues Cys1387, Cys1399, and Cys1404 each contribute to the Zn(2+) site. The C4-type; degenerate zinc-finger motif lies at 1387–1404; sequence CDEECCPVNFKRCCPLVC. Residues 1431-1438 are RNA-binding; sequence EYNHRHSV. Residues 1442-1447 are oligomerization; sequence LEALFQ. Residues 1514–1529 lie within the membrane without spanning it; sequence ALTTFVSVAGIIYIIY. Residues 1530–2203 are Cytoplasmic-facing; sequence KLFAGFQGAY…TLRRKWLDSF (674 aa). O-(5'-phospho-RNA)-tyrosine is present on Tyr1539. The 179-residue stretch at 1559–1737 folds into the Peptidase C3 domain; the sequence is GPAFEFAVAM…FSAALLRHYF (179 aa). Residues His1598, Glu1629, and Cys1705 each act as for protease 3C activity in the active site. Residues 1968 to 2084 form the RdRp catalytic domain; sequence GHLIAFDYSG…SYPWPIDASL (117 aa). Positions 1974 and 2070 each coordinate Mg(2+).

It belongs to the picornaviruses polyprotein family. As to quaternary structure, interacts with capsid protein VP1 and capsid protein VP3 to form heterotrimeric protomers. Interacts with capsid protein VP0, and capsid protein VP3 to form heterotrimeric protomers. Five protomers subsequently associate to form pentamers which serve as building blocks for the capsid. Interacts with capsid protein VP2, capsid protein VP3 and capsid protein VP4 following cleavage of capsid protein VP0. In terms of assembly, interacts with capsid protein VP1 and capsid protein VP3 in the mature capsid. As to quaternary structure, interacts with capsid protein VP0 and capsid protein VP1 to form heterotrimeric protomers. Five protomers subsequently associate to form pentamers which serve as building blocks for the capsid. Interacts with capsid protein VP4 in the mature capsid. Interacts with protein 2C; this interaction may be important for virion morphogenesis. Interacts with capsid protein VP1 and capsid protein VP3. In terms of assembly, homodimer. As to quaternary structure, homohexamer; forms a hexameric ring structure with 6-fold symmetry characteristic of AAA+ ATPases. Interacts (via N-terminus) with host RTN3 (via reticulon domain); this interaction is important for viral replication. Interacts with capsid protein VP3; this interaction may be important for virion morphogenesis. Interacts with protein 3CD. In terms of assembly, homodimer. Interacts with host GBF1. Interacts (via GOLD domain) with host ACBD3 (via GOLD domain); this interaction allows the formation of a viral protein 3A/ACBD3 heterotetramer with a 2:2 stoichiometry, which will stimulate the recruitment of host PI4KB in order to synthesize PI4P at the viral RNA replication sites. As to quaternary structure, interacts with RNA-directed RNA polymerase. Interacts with protein 3AB and with RNA-directed RNA polymerase. In terms of assembly, interacts with Viral protein genome-linked and with protein 3CD. Requires Mg(2+) as cofactor. Post-translationally, specific enzymatic cleavages in vivo by the viral proteases yield processing intermediates and the mature proteins. In terms of processing, myristoylation is required for the formation of pentamers during virus assembly. Further assembly of 12 pentamers and a molecule of genomic RNA generates the provirion. During virion maturation, immature virions are rendered infectious following cleavage of VP0 into VP4 and VP2. This maturation seems to be an autocatalytic event triggered by the presence of RNA in the capsid and it is followed by a conformational change infectious virion. Post-translationally, myristoylation is required during RNA encapsidation and formation of the mature virus particle. In terms of processing, VPg is uridylylated by the polymerase into VPg-pUpU. This acts as a nucleotide-peptide primer for the genomic RNA replication.

The protein resides in the virion. Its subcellular location is the host cytoplasm. The protein localises to the host cytoplasmic vesicle membrane. It is found in the host nucleus. The enzyme catalyses a ribonucleoside 5'-triphosphate + H2O = a ribonucleoside 5'-diphosphate + phosphate + H(+). It catalyses the reaction Selective cleavage of Tyr-|-Gly bond in the picornavirus polyprotein.. The catalysed reaction is RNA(n) + a ribonucleoside 5'-triphosphate = RNA(n+1) + diphosphate. It carries out the reaction Selective cleavage of Gln-|-Gly bond in the poliovirus polyprotein. In other picornavirus reactions Glu may be substituted for Gln, and Ser or Thr for Gly.. Replication or transcription is subject to high level of random mutations by the nucleotide analog ribavirin. Its function is as follows. Forms an icosahedral capsid of pseudo T=3 symmetry with capsid proteins VP2 and VP3. The capsid is 300 Angstroms in diameter, composed of 60 copies of each capsid protein and enclosing the viral positive strand RNA genome. Capsid protein VP1 mainly forms the vertices of the capsid. Capsid protein VP1 interacts with host cell receptor to provide virion attachment to target host cells. This attachment induces virion internalization. Tyrosine kinases are probably involved in the entry process. After binding to its receptor, the capsid undergoes conformational changes. Capsid protein VP1 N-terminus (that contains an amphipathic alpha-helix) and capsid protein VP4 are externalized. Together, they shape a pore in the host membrane through which viral genome is translocated to host cell cytoplasm. Forms an icosahedral capsid of pseudo T=3 symmetry with capsid proteins VP2 and VP3. The capsid is 300 Angstroms in diameter, composed of 60 copies of each capsid protein and enclosing the viral positive strand RNA genome. In terms of biological role, lies on the inner surface of the capsid shell. After binding to the host receptor, the capsid undergoes conformational changes. Capsid protein VP4 is released, Capsid protein VP1 N-terminus is externalized, and together, they shape a pore in the host membrane through which the viral genome is translocated into the host cell cytoplasm. Functionally, component of immature procapsids, which is cleaved into capsid proteins VP4 and VP2 after maturation. Allows the capsid to remain inactive before the maturation step. Its function is as follows. Cysteine protease that cleaves viral polyprotein and specific host proteins. It is responsible for the autocatalytic cleavage between the P1 and P2 regions, which is the first cleavage occurring in the polyprotein. Also cleaves the host translation initiation factor EIF4G1, in order to shut down the capped cellular mRNA translation. Inhibits the host nucleus-cytoplasm protein and RNA trafficking by cleaving host members of the nuclear pores. Counteracts stress granule formation probably by antagonizing its assembly or promoting its dissassembly. Plays an essential role in the virus replication cycle by acting as a viroporin. Creates a pore in the host endoplasmic reticulum and as a consequence releases Ca2+ in the cytoplasm of infected cell. In turn, high levels of cytoplasmic calcium may trigger membrane trafficking and transport of viral ER-associated proteins to viroplasms, sites of viral genome replication. In terms of biological role, induces and associates with structural rearrangements of intracellular membranes. Displays RNA-binding, nucleotide binding and NTPase activities. May play a role in virion morphogenesis and viral RNA encapsidation by interacting with the capsid protein VP3. Functionally, localizes the viral replication complex to the surface of membranous vesicles. Together with protein 3CD binds the Cis-Active RNA Element (CRE) which is involved in RNA synthesis initiation. Acts as a cofactor to stimulate the activity of 3D polymerase, maybe through a nucleid acid chaperone activity. Its function is as follows. Localizes the viral replication complex to the surface of membranous vesicles. It inhibits host cell endoplasmic reticulum-to-Golgi apparatus transport and causes the disassembly of the Golgi complex, possibly through GBF1 interaction. This would result in depletion of MHC, trail receptors and IFN receptors at the host cell surface. Plays an essential role in viral RNA replication by recruiting ACBD3 and PI4KB at the viral replication sites, thereby allowing the formation of the rearranged membranous structures where viral replication takes place. Acts as a primer for viral RNA replication and remains covalently bound to viral genomic RNA. VPg is uridylylated prior to priming replication into VPg-pUpU. The oriI viral genomic sequence may act as a template for this. The VPg-pUpU is then used as primer on the genomic RNA poly(A) by the RNA-dependent RNA polymerase to replicate the viral genome. During genome replication, the VPg-RNA linkage is removed by the host TDP2, thereby accelerating replication. During the late stage of the replication cycle, host TDP2 is excluded from sites of viral RNA synthesis and encapsidation, allowing for the generation of progeny virions. In terms of biological role, involved in the viral replication complex and viral polypeptide maturation. It exhibits protease activity with a specificity and catalytic efficiency that is different from protease 3C. Protein 3CD lacks polymerase activity. Protein 3CD binds to the 5'UTR of the viral genome. Functionally, replicates the viral genomic RNA on the surface of intracellular membranes. May form linear arrays of subunits that propagate along a strong head-to-tail interaction called interface-I. Covalently attaches UMP to a tyrosine of VPg, which is used to prime RNA synthesis. The positive stranded RNA genome is first replicated at virus induced membranous vesicles, creating a dsRNA genomic replication form. This dsRNA is then used as template to synthesize positive stranded RNA genomes. ss(+)RNA genomes are either translated, replicated or encapsidated. Its function is as follows. Major viral protease that mediates proteolytic processing of the polyprotein. Cleaves host EIF5B, contributing to host translation shutoff. Also cleaves host PABPC1, contributing to host translation shutoff. Cleaves host NLRP1, triggers host N-glycine-mediated degradation of the autoinhibitory NLRP1 N-terminal fragment. This Echovirus 9 (strain Barty) protein is Genome polyprotein.